The following is a 591-amino-acid chain: Probable translation initiation factor IF-2 (591 aa).

Residues 7-223 (LRTPIVCVMG…LLGLAQKFLE (217 aa)) form the tr-type G domain. The G1 stretch occupies residues 16–23 (GHVDHGKT). Position 16-23 (16-23 (GHVDHGKT)) interacts with GTP. The segment at 41–45 (AITQH) is G2. A G3 region spans residues 78–81 (DTPG). GTP-binding positions include 78–82 (DTPGH) and 132–135 (NKID). A G4 region spans residues 132-135 (NKID). The tract at residues 200–202 (SAM) is G5.

It belongs to the TRAFAC class translation factor GTPase superfamily. Classic translation factor GTPase family. IF-2 subfamily.

In terms of biological role, function in general translation initiation by promoting the binding of the formylmethionine-tRNA to ribosomes. Seems to function along with eIF-2. The chain is Probable translation initiation factor IF-2 from Methanosarcina barkeri (strain Fusaro / DSM 804).